The sequence spans 334 residues: Beta-hexosaminidase (334 aa).

Residues Asp-62, Arg-70, Arg-131, and 161–162 (KH) contribute to the substrate site. His-174 serves as the catalytic Proton donor/acceptor. The active-site Nucleophile is the Asp-246.

It belongs to the glycosyl hydrolase 3 family. NagZ subfamily.

The protein resides in the cytoplasm. It catalyses the reaction Hydrolysis of terminal non-reducing N-acetyl-D-hexosamine residues in N-acetyl-beta-D-hexosaminides.. Its pathway is cell wall biogenesis; peptidoglycan recycling. In terms of biological role, plays a role in peptidoglycan recycling by cleaving the terminal beta-1,4-linked N-acetylglucosamine (GlcNAc) from peptide-linked peptidoglycan fragments, giving rise to free GlcNAc, anhydro-N-acetylmuramic acid and anhydro-N-acetylmuramic acid-linked peptides. This is Beta-hexosaminidase from Tolumonas auensis (strain DSM 9187 / NBRC 110442 / TA 4).